Reading from the N-terminus, the 130-residue chain is Small ribosomal subunit protein uS9 (130 aa).

The disordered stretch occupies residues R109 to R130. A compositionally biased stretch (basic residues) spans K111–R130.

It belongs to the universal ribosomal protein uS9 family.

This chain is Small ribosomal subunit protein uS9, found in Alkaliphilus metalliredigens (strain QYMF).